Consider the following 150-residue polypeptide: Endoribonuclease YbeY (150 aa).

Positions 112, 116, and 122 each coordinate Zn(2+).

This sequence belongs to the endoribonuclease YbeY family. Requires Zn(2+) as cofactor.

The protein resides in the cytoplasm. Its function is as follows. Single strand-specific metallo-endoribonuclease involved in late-stage 70S ribosome quality control and in maturation of the 3' terminus of the 16S rRNA. This chain is Endoribonuclease YbeY, found in Geobacter metallireducens (strain ATCC 53774 / DSM 7210 / GS-15).